The primary structure comprises 300 residues: tRNA pseudouridine synthase A (300 aa).

Catalysis depends on aspartate 67, which acts as the Nucleophile. Tyrosine 125 serves as a coordination point for substrate.

This sequence belongs to the tRNA pseudouridine synthase TruA family. As to quaternary structure, homodimer.

The catalysed reaction is uridine(38/39/40) in tRNA = pseudouridine(38/39/40) in tRNA. Formation of pseudouridine at positions 38, 39 and 40 in the anticodon stem and loop of transfer RNAs. The chain is tRNA pseudouridine synthase A from Synechococcus sp. (strain CC9902).